Here is an 89-residue protein sequence, read N- to C-terminus: Small ribosomal subunit protein uS15 (89 aa).

The protein belongs to the universal ribosomal protein uS15 family. Part of the 30S ribosomal subunit. Forms a bridge to the 50S subunit in the 70S ribosome, contacting the 23S rRNA.

Its function is as follows. One of the primary rRNA binding proteins, it binds directly to 16S rRNA where it helps nucleate assembly of the platform of the 30S subunit by binding and bridging several RNA helices of the 16S rRNA. Functionally, forms an intersubunit bridge (bridge B4) with the 23S rRNA of the 50S subunit in the ribosome. In Methylocella silvestris (strain DSM 15510 / CIP 108128 / LMG 27833 / NCIMB 13906 / BL2), this protein is Small ribosomal subunit protein uS15.